The sequence spans 857 residues: Mitogen-activated protein kinase kinase kinase dlk-1 (857 aa).

The Protein kinase domain occupies 62–304 (ISNLEWLGSG…FSHIRQHWEI (243 aa)). ATP-binding positions include 68–76 (LGSGSQGAV) and Lys-89. Asp-173 functions as the Proton acceptor in the catalytic mechanism. Disordered stretches follow at residues 441–503 (EEMS…ISRN), 572–625 (RIAS…PSRN), 733–775 (NAND…MESE), and 818–857 (HSIK…AVRI). The segment covering 467–488 (SSGAQSSPFSRQSSCRSSAGQQ) has biased composition (low complexity). A compositionally biased stretch (polar residues) spans 609 to 623 (APRSSSKLNRSSYPS). Residues 753–762 (ADVESSEDEG) are compositionally biased toward acidic residues. Over residues 763–772 (NGNNILNTSM) the composition is skewed to polar residues.

The protein belongs to the protein kinase superfamily. STE Ser/Thr protein kinase family. MAP kinase kinase kinase subfamily. Requires Mg(2+) as cofactor. Post-translationally, ubiquitinated by rpm-1. Negatively regulated by ubiquitination by fsn-1 bound rpm-1, followed by degradation.

It localises to the synapse. It catalyses the reaction L-seryl-[protein] + ATP = O-phospho-L-seryl-[protein] + ADP + H(+). The catalysed reaction is L-threonyl-[protein] + ATP = O-phospho-L-threonyl-[protein] + ADP + H(+). Component of a MAP kinase pathway that functions presynaptically to regulate synaptic architecture and presynaptic differentiation. Phosphorylates and activates mkk-4. This is Mitogen-activated protein kinase kinase kinase dlk-1 from Caenorhabditis briggsae.